The following is a 520-amino-acid chain: Dual specificity tyrosine-phosphorylation-regulated kinase 4 (520 aa).

A disordered region spans residues 1-32 (MPASELKASEIPFHPSIKTQDPKAEEKSPKKQ). A Bipartite nuclear localization signal motif is present at residues 19–37 (TQDPKAEEKSPKKQKVTLT). The span at 20 to 29 (QDPKAEEKSP) shows a compositional bias: basic and acidic residues. Positions 104–400 (YEVLETIGKG…PDQALKHAWI (297 aa)) constitute a Protein kinase domain. ATP is bound by residues 110–118 (IGKGSFGQV), Lys133, and 183–186 (FELL). Asp230 serves as the catalytic Proton acceptor. A Phosphotyrosine; by autocatalysis modification is found at Tyr264. Positions 404-467 (RNLKPQPRPQ…KHVQHSGDQQ (64 aa)) are disordered. The segment covering 439–457 (RKADEITKETTEKTKDSPT) has biased composition (basic and acidic residues).

The protein belongs to the protein kinase superfamily. CMGC Ser/Thr protein kinase family. MNB/DYRK subfamily. It depends on Mg(2+) as a cofactor. In terms of processing, autophosphorylation on Tyr-264 in the activation loop is required for kinase activity.

Its subcellular location is the cytoplasm. The protein resides in the nucleus. It carries out the reaction L-seryl-[protein] + ATP = O-phospho-L-seryl-[protein] + ADP + H(+). It catalyses the reaction L-threonyl-[protein] + ATP = O-phospho-L-threonyl-[protein] + ADP + H(+). The catalysed reaction is L-tyrosyl-[protein] + ATP = O-phospho-L-tyrosyl-[protein] + ADP + H(+). Its function is as follows. Possible non-essential role in spermiogenesis. The sequence is that of Dual specificity tyrosine-phosphorylation-regulated kinase 4 (DYRK4) from Homo sapiens (Human).